The chain runs to 413 residues: uncharacterized protein (413 aa).

7 helical membrane passes run 10–32, 162–184, 189–211, 232–254, 259–276, 288–310, and 325–347; these read GLTI…GRLP, VFLH…LVFL, LLPR…AFLV, LSFR…LFFF, YSYS…ILLV, ALMV…SFVT, and FAYA…SLIL.

It localises to the cell membrane. This is an uncharacterized protein from Aquifex aeolicus (strain VF5).